A 156-amino-acid chain; its full sequence is Large ribosomal subunit protein uL22 (156 aa).

Belongs to the universal ribosomal protein uL22 family. As to quaternary structure, part of the 50S ribosomal subunit.

Functionally, this protein binds specifically to 23S rRNA. It makes multiple contacts with different domains of the 23S rRNA in the assembled 50S subunit and ribosome. In terms of biological role, the globular domain of the protein is located near the polypeptide exit tunnel on the outside of the subunit, while an extended beta-hairpin is found that lines the wall of the exit tunnel in the center of the 70S ribosome. The chain is Large ribosomal subunit protein uL22 from Sulfolobus acidocaldarius (strain ATCC 33909 / DSM 639 / JCM 8929 / NBRC 15157 / NCIMB 11770).